Reading from the N-terminus, the 159-residue chain is Ribosomal RNA large subunit methyltransferase H (159 aa).

S-adenosyl-L-methionine contacts are provided by L76 and G108.

This sequence belongs to the RNA methyltransferase RlmH family. As to quaternary structure, homodimer.

The protein resides in the cytoplasm. The catalysed reaction is pseudouridine(1915) in 23S rRNA + S-adenosyl-L-methionine = N(3)-methylpseudouridine(1915) in 23S rRNA + S-adenosyl-L-homocysteine + H(+). In terms of biological role, specifically methylates the pseudouridine at position 1915 (m3Psi1915) in 23S rRNA. This chain is Ribosomal RNA large subunit methyltransferase H, found in Levilactobacillus brevis (strain ATCC 367 / BCRC 12310 / CIP 105137 / JCM 1170 / LMG 11437 / NCIMB 947 / NCTC 947) (Lactobacillus brevis).